The chain runs to 161 residues: Phosphopantetheine adenylyltransferase (161 aa).

Position 9 (Ser-9) interacts with substrate. ATP-binding positions include 9–10 (SF) and His-17. Substrate contacts are provided by Lys-41, Leu-73, and Lys-87. ATP-binding positions include 88–90 (GLR), Glu-98, and 123–129 (YSYLSSS).

This sequence belongs to the bacterial CoaD family. In terms of assembly, homohexamer. Mg(2+) serves as cofactor.

It is found in the cytoplasm. The enzyme catalyses (R)-4'-phosphopantetheine + ATP + H(+) = 3'-dephospho-CoA + diphosphate. It participates in cofactor biosynthesis; coenzyme A biosynthesis; CoA from (R)-pantothenate: step 4/5. Its function is as follows. Reversibly transfers an adenylyl group from ATP to 4'-phosphopantetheine, yielding dephospho-CoA (dPCoA) and pyrophosphate. This chain is Phosphopantetheine adenylyltransferase, found in Clostridium novyi (strain NT).